Reading from the N-terminus, the 744-residue chain is Prestin (744 aa).

Residues 1 to 79 (MDHAEENEIP…WLPAYKFKEY (79 aa)) are Cytoplasmic-facing. The helical transmembrane segment at 80 to 105 (VLGDLVSGISTGVLQLPQGLAFAMLA) threads the bilayer. Topologically, residues 106–109 (AVPP) are extracellular. Residues 110 to 125 (VFGLYSSFYPVIMYCF) form a helical membrane-spanning segment. The Cytoplasmic portion of the chain corresponds to 126–137 (FGTSRHISIGPF). The helical transmembrane segment at 138–147 (AVISLMIGGV) threads the bilayer. Residues 148–178 (AVRLVPDDIVIPGGVNATNGTEARDALRVKV) are Extracellular-facing. Residues 158 to 168 (IPGGVNATNGT) carry the Involved in motor function motif. N-linked (GlcNAc...) asparagine glycosylation is found at N163 and N166. A helical transmembrane segment spans residues 179 to 196 (AMSVTLLSGIIQFCLGVC). Residues 197 to 208 (RFGFVAIYLTEP) are Cytoplasmic-facing. A helical membrane pass occupies residues 209–230 (LVRGFTTAAAVHVFTSMLKYLF). Topologically, residues 231–243 (GVKTKRYSGIFSV) are extracellular. An intramembrane region (helical) is located at residues 244–252 (VYSTVAVLQ). The Extracellular portion of the chain corresponds to 253–258 (NVKNLN). The chain crosses the membrane as a helical span at residues 259 to 282 (VCSLGVGLMVFGLLLGGKEFNERF). Residues 283–291 (KEKLPAPIP) lie on the Cytoplasmic side of the membrane. Residues 292-304 (LEFFAVVMGTGIS) traverse the membrane as a helical segment. Topologically, residues 305–337 (AGFNLHESYSVDVVGTLPLGLLPPANPDTSLFH) are extracellular. The helical transmembrane segment at 338–361 (LVYVDAIAIAIVGFSVTISMAKTL) threads the bilayer. Residues 362–370 (ANKHGYQVD) lie on the Cytoplasmic side of the membrane. Residues 371–388 (GNQELIALGICNSIGSLF) form a helical membrane-spanning segment. The Extracellular segment spans residues 389 to 396 (QTFSISCS). The chain crosses the membrane as a helical span at residues 397-406 (LSRSLVQEGT). S398 lines the salicylate pocket. Residues 407–410 (GGKT) lie on the Cytoplasmic side of the membrane. A helical membrane pass occupies residues 411–429 (QLAGCLASLMILLVILATG). Residues 430–436 (FLFESLP) lie on the Extracellular side of the membrane. Residues 437–455 (QAVLSAIVIVNLKGMFMQF) form a helical membrane-spanning segment. The Cytoplasmic segment spans residues 456-469 (SDLPFFWRTSKIEL). The helical transmembrane segment at 470 to 484 (TIWLTTFVSSLFLGL) threads the bilayer. D485 is a topological domain (extracellular). A helical transmembrane segment spans residues 486–497 (YGLITAVIIALL). Over 498–744 (TVIYRTQSPS…PNATPTTPEA (247 aa)) the chain is Cytoplasmic. Residues 505–718 (SPSYKVLGQL…AVLGSHVREA (214 aa)) form an extended region for STAS domain region. Positions 525–713 (AYEEVKEIPG…HSIHDAVLGS (189 aa)) constitute an STAS domain. The segment at 717–744 (EAMAEQEASAPPPQDDMEPNATPTTPEA) is disordered.

The protein belongs to the SLC26A/SulP transporter (TC 2.A.53) family. As to quaternary structure, homodimer. Interacts (via STAS domain) with CALM; this interaction is calcium-dependent and the STAS domain interacts with only one lobe of CALM which is an elongated conformation. Interacts with MYH1. In terms of tissue distribution, highly expressed in mature outer hair cells, but not in inner hair cells or other cells of the basilar membrane and the organ of Corti.

The protein resides in the lateral cell membrane. The catalysed reaction is 2 hydrogencarbonate(in) + chloride(out) = 2 hydrogencarbonate(out) + chloride(in). Its function is as follows. Voltage-sensitive motor protein that drives outer hair cell (OHC) electromotility (eM) and participates in sound amplification in the hearing organ. Converts changes in the transmembrane electric potential into mechanical displacements resulting in the coupling of its expansion to movement of a charged voltage sensor across the lipid membrane. The nature of the voltage sensor is not completely clear, and two models compete. In the first model, acts as an incomplete transporter where intracellular chloride anion acts as extrinsic voltage sensor that drives conformational change in the protein which is sufficient to produce a length change in the plane of the membrane and hence in the length of the OHC. The second model in which multiple charged amino acid residues are distributed at the intracellular and extracellular membrane interfaces that form an intrinsic voltage sensor, whose movement produces the non-linear capacitance (NLC). However, the effective voltage sensor may be the result of a hybrid voltage sensor assembled from intrinsic charge (charged residues) and extrinsic charge (bound anion). Notably, binding of anions to the anion-binding pocket partially neutralizes the intrinsic positive charge rather than to form an electrically negative sensor, therefore remaining charge may serve as voltage sensor that, after depolarization, moves from down (expanded state) to up (contracted) conformation, which is accompanied by an eccentric contraction of the intermembrane cross-sectional area of the protein as well as a major increase in the hydrophobic thickness of the protein having as consequences the plasma membrane thickening and the cell contraction after membrane depolarization. The anion-binding pocket transits from the inward-open (Down) state, where it is exposed toward the intracellular solvent in the absence of anion, to the occluded (Up) state upon anion binding. Salicylate competes for the anion-binding site and inhibits the voltage-sensor movement, and therefore inhibits the charge transfer and electromotility by displacing Cl(-) from the anion-binding site and by preventing the structural transitions to the contracted state. In addition, can act as a weak Cl(-)/HCO3 (-) antiporter across the cell membrane and so regulate the intracellular pH of the outer hair cells (OHCs), while firstly found as being unable to mediate electrogenic anion transport. Moreover, supports a role in cardiac mechanical amplification serving as an elastic element to enhance the actomyosin- based sarcomere contraction system. The protein is Prestin of Meriones unguiculatus (Mongolian jird).